A 474-amino-acid chain; its full sequence is 3-isopropylmalate dehydratase large subunit (474 aa).

Residues cysteine 350, cysteine 415, and cysteine 418 each coordinate [4Fe-4S] cluster.

Belongs to the aconitase/IPM isomerase family. LeuC type 1 subfamily. Heterodimer of LeuC and LeuD. [4Fe-4S] cluster is required as a cofactor.

The enzyme catalyses (2R,3S)-3-isopropylmalate = (2S)-2-isopropylmalate. Its pathway is amino-acid biosynthesis; L-leucine biosynthesis; L-leucine from 3-methyl-2-oxobutanoate: step 2/4. Functionally, catalyzes the isomerization between 2-isopropylmalate and 3-isopropylmalate, via the formation of 2-isopropylmaleate. This is 3-isopropylmalate dehydratase large subunit from Phenylobacterium zucineum (strain HLK1).